We begin with the raw amino-acid sequence, 170 residues long: Neurotensin/neuromedin N (170 aa).

A signal peptide spans 1–23 (MMAGMKIQLVCMILLAFSSWSLC).

This sequence belongs to the neurotensin family. Interacts with NTSR1. Interacts with SORT1. Interacts with SORL1. Post-translationally, neurotensin is cleaved and degraded by Angiotensin-converting enzyme (ACE) and neprilysin (MME). In terms of tissue distribution, brain and gut.

The protein localises to the secreted. It is found in the cytoplasmic vesicle. The protein resides in the secretory vesicle. In terms of biological role, neurotensin may play an endocrine or paracrine role in the regulation of fat metabolism. It causes contraction of smooth muscle. The sequence is that of Neurotensin/neuromedin N (NTS) from Bos taurus (Bovine).